Here is a 245-residue protein sequence, read N- to C-terminus: DNA repair protein RecO (245 aa).

It belongs to the RecO family.

Its function is as follows. Involved in DNA repair and RecF pathway recombination. In Anaplasma phagocytophilum (strain HZ), this protein is DNA repair protein RecO.